Here is a 362-residue protein sequence, read N- to C-terminus: Phosphate acyltransferase (362 aa).

A disordered region spans residues 343-362 (TKKISTSTINPKTSETTKES). Positions 344–356 (KKISTSTINPKTS) are enriched in polar residues.

This sequence belongs to the PlsX family. As to quaternary structure, homodimer. Probably interacts with PlsY.

It is found in the cytoplasm. It catalyses the reaction a fatty acyl-[ACP] + phosphate = an acyl phosphate + holo-[ACP]. The protein operates within lipid metabolism; phospholipid metabolism. In terms of biological role, catalyzes the reversible formation of acyl-phosphate (acyl-PO(4)) from acyl-[acyl-carrier-protein] (acyl-ACP). This enzyme utilizes acyl-ACP as fatty acyl donor, but not acyl-CoA. In Aster yellows witches'-broom phytoplasma (strain AYWB), this protein is Phosphate acyltransferase.